We begin with the raw amino-acid sequence, 371 residues long: Alanine dehydrogenase (371 aa).

Arginine 15 and lysine 74 together coordinate substrate. Catalysis depends on histidine 95, which acts as the Proton donor/acceptor. Residues serine 133, 177 to 178 (QA), aspartate 197, serine 219, 238 to 239 (VL), 266 to 269 (IAID), arginine 279, and 298 to 301 (VANM) each bind NAD(+). Aspartate 269 functions as the Proton donor/acceptor in the catalytic mechanism.

The protein belongs to the AlaDH/PNT family. As to quaternary structure, homohexamer. Trimer of dimer.

The catalysed reaction is L-alanine + NAD(+) + H2O = pyruvate + NH4(+) + NADH + H(+). It participates in amino-acid degradation; L-alanine degradation via dehydrogenase pathway; NH(3) and pyruvate from L-alanine: step 1/1. Functionally, catalyzes the reversible reductive amination of pyruvate to L-alanine. May play a role in cell wall synthesis as L-alanine is an important constituent of the peptidoglycan layer. The protein is Alanine dehydrogenase (ald) of Staphylococcus saprophyticus subsp. saprophyticus (strain ATCC 15305 / DSM 20229 / NCIMB 8711 / NCTC 7292 / S-41).